Here is a 1012-residue protein sequence, read N- to C-terminus: AP-2 complex subunit alpha-1 (1012 aa).

HEAT repeat units follow at residues 254–289 (AMRA…VVKN), 354–391 (DIIK…VSNA), 393–430 (DIVE…DLSW), and 525–565 (PTIP…CIDV). A disordered region spans residues 652-678 (STDPESVARSLSHPNGTLSNIDPQTPS). Positions 663–675 (SHPNGTLSNIDPQ) are enriched in polar residues. The region spanning 742 to 841 (ALCLKDSGVL…LDFSYKFGAN (100 aa)) is the GAE domain.

It belongs to the adaptor complexes large subunit family. In terms of assembly, adaptor protein complex 2 (AP-2) is a heterotetramer composed of two large adaptins (alpha-type and beta-type subunits), a medium adaptin (mu-type subunit) and a small adaptin (sigma-type subunit). Binds to EPSIN2.

The protein localises to the membrane. It is found in the coated pit. Its function is as follows. Subunit of the adaptor protein complex 2 (AP-2). Adaptor protein complexes function in protein transport via transport vesicles in different membrane traffic pathways. Adaptor protein complexes are vesicle coat components and appear to be involved in cargo selection and vesicle formation. AP-2 is involved in clathrin-dependent endocytosis in which cargo proteins are incorporated into vesicles surrounded by clathrin (clathrin-coated vesicles, CCVs) which are destined for fusion with the early endosome. The complex binds polyphosphoinositides. The sequence is that of AP-2 complex subunit alpha-1 (ALPHA-ADR) from Arabidopsis thaliana (Mouse-ear cress).